Reading from the N-terminus, the 143-residue chain is Large ribosomal subunit protein uL11 (143 aa).

It belongs to the universal ribosomal protein uL11 family. In terms of assembly, part of the ribosomal stalk of the 50S ribosomal subunit. Interacts with L10 and the large rRNA to form the base of the stalk. L10 forms an elongated spine to which L12 dimers bind in a sequential fashion forming a multimeric L10(L12)X complex. In terms of processing, one or more lysine residues are methylated.

In terms of biological role, forms part of the ribosomal stalk which helps the ribosome interact with GTP-bound translation factors. The sequence is that of Large ribosomal subunit protein uL11 from Polynucleobacter necessarius subsp. necessarius (strain STIR1).